Here is a 393-residue protein sequence, read N- to C-terminus: Protein FAM53C (393 aa).

The residue at position 1 (Met-1) is an N-acetylmethionine. The tract at residues 77–120 (HLRPPSRGNSPKEPPLSQVLSPEPPDPEKLPVPPAPPSKRHCRS) is disordered. Phosphoserine occurs at positions 122 and 162. Disordered stretches follow at residues 141 to 167 (LWTP…PKRV) and 204 to 283 (QPCA…ARKT). A compositionally biased stretch (polar residues) spans 204–215 (QPCATSPQSGSW). Ser-232, Ser-234, Ser-255, Ser-273, and Ser-299 each carry phosphoserine. Positions 241-256 (ASRFLPSARSSPASSP) are enriched in low complexity. Residues 343-355 (SCSPVEGSSQVLS) are compositionally biased toward low complexity. Residues 343–365 (SCSPVEGSSQVLSESEEEEEGSV) are disordered.

It belongs to the FAM53 family.

The polypeptide is Protein FAM53C (Mus musculus (Mouse)).